The primary structure comprises 339 residues: Sperm acrosome membrane-associated protein 6 (339 aa).

An N-terminal signal peptide occupies residues 1–41 (MTSQRSLSSPQTRRPSVMGLISLVGSIVLLFLLIFRASTWA). Positions 42–45 (CLFC) match the CXXC motif motif. Disulfide bonds link Cys-42–Cys-155, Cys-45–Cys-158, Cys-56–Cys-70, Cys-140–Cys-163, Cys-144–Cys-169, and Cys-186–Cys-241. Residues 42-310 (CLFCFTTYEE…NPQALTLGNL (269 aa)) lie on the Extracellular side of the membrane. A CXXC motif motif is present at residues 155 to 158 (CSGC). One can recognise an Ig-like domain in the interval 166–251 (PLDCPVQDML…VILHDQRPLA (86 aa)). An N-linked (GlcNAc...) asparagine glycan is attached at Asn-258. A helical membrane pass occupies residues 311 to 331 (FLLAATAALGSASVTLLVWLF). Residues 332–339 (FRWYLSGN) lie on the Cytoplasmic side of the membrane.

It belongs to the SPACA6 family. Forms a complex with IZUMO1 and TMEM81 on spermatocyte cell membrane required for fertilization. Highly expressed in testis. Minor expression also detected in epididymis, seminal vesicle and ovary. Predominantly expressed in testicular germ cells during spermiogenesis. Most abundant in round spermatids and detected at lower levels in elongating spermatids.

Its subcellular location is the cytoplasmic vesicle. The protein localises to the secretory vesicle. It localises to the acrosome membrane. Its function is as follows. Sperm protein required for fusion of sperm with the egg membrane during fertilization. May regulate the expression of sperm surface protein DCST2. This chain is Sperm acrosome membrane-associated protein 6, found in Mus musculus (Mouse).